The following is a 362-amino-acid chain: MYSSVVHLARANPFNAPHLQLVHDGLAGPRSDPAGPPGPPRRSRNLAAAAVEEQYSCDYGSGRFFILCGLGGIISCGTTHTALVPLDLVKCRMQVDPQKYKSIFNGFSVTLKEDGFRGLAKGWAPTFIGYSLQGLCKFGFYEVFKVLYSNMLGEENAYLWRTSLYLAASASAEFFADIALAPMEAAKVRIQTQPGYANTLRDAAPKMYKEEGLKAFYKGVAPLWMRQIPYTMMKFACFERTVEALYKFVVPKPRSECSKPEQLVVTFVAGYIAGVFCAIVSHPADSVVSVLNKEKGSSASEVLKRLGFRGVWKGLFARIIMIGTLTALQWFIYDSVKVYFRLPRPPPPEMPESLKKKLGYTQ.

The transit peptide at 1 to 49 directs the protein to the mitochondrion; the sequence is MYSSVVHLARANPFNAPHLQLVHDGLAGPRSDPAGPPGPPRRSRNLAAA. The Mitochondrial intermembrane segment spans residues 50–63; the sequence is AVEEQYSCDYGSGR. Solcar repeat units lie at residues 63–147, 160–244, and 261–339; these read RFFI…FKVL, WRTS…TVEA, and EQLV…VKVY. The chain crosses the membrane as a helical span at residues 64-86; it reads FFILCGLGGIISCGTTHTALVPL. At 87 to 121 the chain is on the mitochondrial matrix side; the sequence is DLVKCRMQVDPQKYKSIFNGFSVTLKEDGFRGLAK. At Lys-99 the chain carries N6-acetyllysine. The residue at position 112 (Lys-112) is an N6-methyllysine. Residues 122–141 form a helical membrane-spanning segment; the sequence is GWAPTFIGYSLQGLCKFGFY. The Mitochondrial intermembrane portion of the chain corresponds to 142 to 161; it reads EVFKVLYSNMLGEENAYLWR. A helical transmembrane segment spans residues 162 to 183; it reads TSLYLAASASAEFFADIALAPM. Residues 184–218 are Mitochondrial matrix-facing; that stretch reads EAAKVRIQTQPGYANTLRDAAPKMYKEEGLKAFYK. Phosphotyrosine is present on Tyr-196. Lys-209 bears the N6-acetyllysine mark. Residues 219–238 traverse the membrane as a helical segment; it reads GVAPLWMRQIPYTMMKFACF. Over 239–261 the chain is Mitochondrial intermembrane; sequence ERTVEALYKFVVPKPRSECSKPE. The chain crosses the membrane as a helical span at residues 262–284; the sequence is QLVVTFVAGYIAGVFCAIVSHPA. At 285 to 314 the chain is on the mitochondrial matrix side; it reads DSVVSVLNKEKGSSASEVLKRLGFRGVWKG. The chain crosses the membrane as a helical span at residues 315 to 333; sequence LFARIIMIGTLTALQWFIY. The Mitochondrial intermembrane portion of the chain corresponds to 334–362; it reads DSVKVYFRLPRPPPPEMPESLKKKLGYTQ.

It belongs to the mitochondrial carrier (TC 2.A.29) family. Interacts with PPIF; the interaction is impaired by CsA. As to expression, expressed in heart, diaphragm and skeletal muscle (at protein level). Not detected in liver, lung, brain, and kidney (at protein level). Ubiquitous (at protein level).

The protein localises to the mitochondrion inner membrane. It carries out the reaction phosphate(in) + H(+)(in) = phosphate(out) + H(+)(out). Its activity is regulated as follows. Up-regulated in the presence of cardiolipin. Its function is as follows. Inorganic ion transporter that transports phosphate or copper ions across the mitochondrial inner membrane into the matrix compartment. Mediates proton-coupled symport of phosphate ions necessary for mitochondrial oxidative phosphorylation of ADP to ATP. Transports copper ions probably in the form of anionic copper(I) complexes to maintain mitochondrial matrix copper pool and to supply copper for cytochrome C oxidase complex assembly. May also play a role in regulation of the mitochondrial permeability transition pore (mPTP). The protein is Solute carrier family 25 member 3 of Bos taurus (Bovine).